A 62-amino-acid polypeptide reads, in one-letter code: Large ribosomal subunit protein uL30 (62 aa).

This sequence belongs to the universal ribosomal protein uL30 family. As to quaternary structure, part of the 50S ribosomal subunit.

This is Large ribosomal subunit protein uL30 from Halalkalibacterium halodurans (strain ATCC BAA-125 / DSM 18197 / FERM 7344 / JCM 9153 / C-125) (Bacillus halodurans).